A 359-amino-acid chain; its full sequence is Proton-gated ion channel (359 aa).

The first 43 residues, 1 to 43 (MFPTGWRPKLSESIAASRMLWQPMAAVAVVQIGLLWFSPPVWG), serve as a signal peptide directing secretion. The Periplasmic segment spans residues 44–235 (QDMVSPPPPI…LDYQLRISRQ (192 aa)). A helical transmembrane segment spans residues 236 to 258 (YFSYIPNIILPMLFILFISWTAF). At 259-261 (WST) the chain is on the cytoplasmic side. A helical membrane pass occupies residues 262–286 (SYEANVTLVVSTLIAHIAFNILVET). Residues 287 to 294 (NLPKTPYM) lie on the Periplasmic side of the membrane. The chain crosses the membrane as a helical span at residues 295–323 (TYTGAIIFMIYLFYFVAVIEVTVQHYLKV). The Cytoplasmic segment spans residues 324–326 (ESQ). The chain crosses the membrane as a helical span at residues 327 to 359 (PARAASITRASRIAFPVVFLLANIILAFLFFGF).

It belongs to the ligand-gated ion channel (TC 1.A.9) family. Homopentamer.

The protein resides in the cell inner membrane. Tetraethylammonium (TEA) and tetrabutylammonium (TBA) inhibit the proton-activated currents in a dose- and voltage-dependent manner in vitro, whereas the blocker of acid sensing ion channels, amiloride, has no effect. Channel current of GLIC can be inhibited by inhaled and intravenous general anesthetics at and below concentrations used clinically. Ion conduction is also inhibited by lidocaine and by divalent transition metal ions such as cadmium ions. Its function is as follows. Cationic channel with similar permeabilities for Na(+) and K(+), that is activated by an increase of the proton concentration on the extracellular side. Displays no permeability for chloride ions. Shows slow kinetics of activation, no desensitization and a single channel conductance of 8 pS. Might contribute to adaptation to external pH change. This is Proton-gated ion channel (glvI) from Gloeobacter violaceus (strain ATCC 29082 / PCC 7421).